Here is a 339-residue protein sequence, read N- to C-terminus: NmrA-like family domain-containing oxidoreductase cpsB (339 aa).

Lys142 lines the NADP(+) pocket.

It belongs to the NmrA-type oxidoreductase family.

It catalyses the reaction didehydrocampesine A + 2 AH2 = campesine A + 2 A. It participates in alkaloid biosynthesis. Oxidoreductase; part of the gene cluster that mediates the biosynthesis of campesine G, a dimeric indole piperazine alkaloid that shows good insecticidal activity Galleria mellonella. Within the pathway, cpsB reduces the unstable (S,S)-trypyl-valyl dihydropiperazine (didehydrocampesine A) intermediate to (S, S)-trypyl-valyl-piperazine (campesine A) using two equivalents of NAD(P)H. The non-canonical non-ribosomal peptide synthetase cpsA catalyzes the first steps of the pathway by producing L-tryptophanal and L-valinal from their respective amino-acids. These products condensate spontaneously to form trypyl-valyl pyrazine also known as didehydrocampesine A. The NmrA-like family domain-containing oxidoreductase cpsB is the next enzyme in cps pathway and reduces the unstable didehydrocampesine A to campesine A. The methyltransferase cpsF and the acetyltransferase cpsE both recognize N13 of piperazine ring to carry out methylation and acetylation of campesine A to produce campesine C and B, respectively. The cytochrome P450 monooxygenase cpsD then acts as a dimerase that catalyzes oxidative heterocoupling between campesine B and C to produce heterodimers with unexpected 6/5/6/6/6/6/5/6 eight-ring scaffold called campesine D. Finally,the cytochrome P450 monooxygenase cpsC is a regioselective dehydrogenase that catalyzes dehydrogenation reaction towards C2-N1 to produce campesine G. The sequence is that of NmrA-like family domain-containing oxidoreductase cpsB from Aspergillus campestris (strain IBT 28561).